The following is a 120-amino-acid chain: Cytochrome c6 (120 aa).

An N-terminal signal peptide occupies residues 1-35 (MFKLFNQASRIFFGIALPCLIFLGGIFSLGNTALA). Residues Cys-49, Cys-52, His-53, and Met-93 each contribute to the heme c site.

It belongs to the cytochrome c family. PetJ subfamily. As to quaternary structure, monomer. Post-translationally, binds 1 heme c group covalently per subunit.

The protein resides in the cellular thylakoid lumen. In terms of biological role, functions as an electron carrier between membrane-bound cytochrome b6-f and photosystem I in oxygenic photosynthesis. This Synechocystis sp. (strain ATCC 27184 / PCC 6803 / Kazusa) protein is Cytochrome c6 (petJ).